The following is a 65-amino-acid chain: Large ribosomal subunit protein bL35 (65 aa).

Belongs to the bacterial ribosomal protein bL35 family.

This chain is Large ribosomal subunit protein bL35, found in Thermoanaerobacter sp. (strain X514).